The chain runs to 292 residues: Probable 2-(5''-triphosphoribosyl)-3'-dephosphocoenzyme-A synthase (292 aa).

The protein belongs to the CitG/MdcB family.

It catalyses the reaction 3'-dephospho-CoA + ATP = 2'-(5''-triphospho-alpha-D-ribosyl)-3'-dephospho-CoA + adenine. This chain is Probable 2-(5''-triphosphoribosyl)-3'-dephosphocoenzyme-A synthase, found in Shigella flexneri serotype 5b (strain 8401).